A 426-amino-acid polypeptide reads, in one-letter code: Serine hydroxymethyltransferase (426 aa).

(6S)-5,6,7,8-tetrahydrofolate is bound by residues Leu-113 and 117–119; that span reads GHL. Lys-222 is modified (N6-(pyridoxal phosphate)lysine). Position 363 to 365 (363 to 365) interacts with (6S)-5,6,7,8-tetrahydrofolate; it reads SAF.

Belongs to the SHMT family. As to quaternary structure, homodimer. The cofactor is pyridoxal 5'-phosphate.

Its subcellular location is the cytoplasm. It catalyses the reaction (6R)-5,10-methylene-5,6,7,8-tetrahydrofolate + glycine + H2O = (6S)-5,6,7,8-tetrahydrofolate + L-serine. It functions in the pathway one-carbon metabolism; tetrahydrofolate interconversion. Its pathway is amino-acid biosynthesis; glycine biosynthesis; glycine from L-serine: step 1/1. Catalyzes the reversible interconversion of serine and glycine with tetrahydrofolate (THF) serving as the one-carbon carrier. This reaction serves as the major source of one-carbon groups required for the biosynthesis of purines, thymidylate, methionine, and other important biomolecules. Also exhibits THF-independent aldolase activity toward beta-hydroxyamino acids, producing glycine and aldehydes, via a retro-aldol mechanism. The protein is Serine hydroxymethyltransferase of Phocaeicola vulgatus (strain ATCC 8482 / DSM 1447 / JCM 5826 / CCUG 4940 / NBRC 14291 / NCTC 11154) (Bacteroides vulgatus).